The chain runs to 164 residues: Histone H1 (164 aa).

A compositionally biased stretch (polar residues) spans 1–10 (MAPRSSTSKS). Residues 1 to 164 (MAPRSSTSKS…KKSSKPAKKN (164 aa)) are disordered. A compositionally biased stretch (basic residues) spans 16-27 (KDHKKAPIKKAI). 2 positions are modified to phosphothreonine: Thr-47 and Thr-54. Composition is skewed to basic and acidic residues over residues 49-61 (VKKDVTPVKADTK), 69-89 (TMKETVSDAKKTVHAAAGDKK), and 117-156 (TKKEVKKDNKTAKKETKKDHKPAKKEAKKETKPAKKDAKK).

Cell-growth/division-associated phosphorylation by a CDC2-like kinase.

It localises to the nucleus. Its subcellular location is the chromosome. Its function is as follows. Histones H1 are necessary for the condensation of nucleosome chains into higher-order structures. In Tetrahymena thermophila (strain SB210), this protein is Histone H1 (HHO).